A 440-amino-acid chain; its full sequence is Xylose isomerase (440 aa).

Active-site residues include His-101 and Asp-104. The Mg(2+) site is built by Glu-232, Glu-268, His-271, Asp-296, Asp-307, Asp-309, and Asp-339.

Belongs to the xylose isomerase family. In terms of assembly, homotetramer. Mg(2+) is required as a cofactor.

The protein localises to the cytoplasm. It catalyses the reaction alpha-D-xylose = alpha-D-xylulofuranose. The sequence is that of Xylose isomerase from Escherichia coli (strain SMS-3-5 / SECEC).